The sequence spans 456 residues: Probable hexose phosphate transport protein (456 aa).

11 consecutive transmembrane segments (helical) span residues 34–54, 70–90, 113–133, 161–181, 185–205, 257–277, 302–322, 331–351, 362–382, 394–414, and 421–441; these read IFYS…SFTF, LGII…VSGV, IFFG…INGW, VWST…GIAI, GWRG…FILI, YVLS…IYVV, LCVS…GWLS, GPMN…LWGT, AFLF…GLAA, ASGF…YPLG, and GWHG…LFFL.

This sequence belongs to the major facilitator superfamily. Organophosphate:Pi antiporter (OPA) (TC 2.A.1.4) family.

Its subcellular location is the cell membrane. In terms of biological role, transport protein for sugar phosphate uptake. This chain is Probable hexose phosphate transport protein, found in Chlamydia muridarum (strain MoPn / Nigg).